Consider the following 116-residue polypeptide: MRALITFALLCLLYITVQGKVSTPKVHVYSHFPGEYGKPNTLICYVSSFHPPDISIELLKNGQVMSDTKQTDLAFEKGWQFHLTKSVAFTPEKGDEYTCSVRHMKETKKFSWEPNM.

The first 19 residues, M1–G19, serve as a signal peptide directing secretion. An Ig-like C1-type domain is found at P24–S111. Cysteines 44 and 99 form a disulfide.

The protein belongs to the beta-2-microglobulin family. As to quaternary structure, heterodimer of an alpha chain and a beta chain. Beta-2-microglobulin is the beta-chain of major histocompatibility complex class I molecules.

It is found in the secreted. Component of the class I major histocompatibility complex (MHC). Involved in the presentation of peptide antigens to the immune system. This Danio rerio (Zebrafish) protein is Beta-2-microglobulin (b2m).